The primary structure comprises 87 residues: Apolipoprotein C-I (87 aa).

Positions M1 to A26 are cleaved as a signal peptide.

Belongs to the apolipoprotein C1 family.

The protein localises to the secreted. In terms of biological role, inhibitor of lipoprotein binding to the low density lipoprotein (LDL) receptor, LDL receptor-related protein, and very low density lipoprotein (VLDL) receptor. Associates with high density lipoproteins (HDL) and the triacylglycerol-rich lipoproteins in the plasma and makes up about 10% of the protein of the VLDL and 2% of that of HDL. Appears to interfere directly with fatty acid uptake and is also the major plasma inhibitor of cholesteryl ester transfer protein (CETP). Binds free fatty acids and reduces their intracellular esterification. Modulates the interaction of APOE with beta-migrating VLDL and inhibits binding of beta-VLDL to the LDL receptor-related protein. This chain is Apolipoprotein C-I (APOC1), found in Pteropus vampyrus (Large flying fox).